Here is an 884-residue protein sequence, read N- to C-terminus: DNA mismatch repair protein MutS (884 aa).

Residue 601-608 (GPNMSGKS) participates in ATP binding. The tract at residues 826 to 845 (ESQLSFFGGEQSSKKQDKPL) is disordered.

The protein belongs to the DNA mismatch repair MutS family.

Its function is as follows. This protein is involved in the repair of mismatches in DNA. It is possible that it carries out the mismatch recognition step. This protein has a weak ATPase activity. The protein is DNA mismatch repair protein MutS of Bacillus cereus (strain ATCC 14579 / DSM 31 / CCUG 7414 / JCM 2152 / NBRC 15305 / NCIMB 9373 / NCTC 2599 / NRRL B-3711).